We begin with the raw amino-acid sequence, 476 residues long: Protein transport protein Sec61 subunit alpha isoform B (476 aa).

Residues 2-33 (GIKFLEVIKPFCAVLPEIQKPERKIQFREKVL) are Cytoplasmic-facing. A helical membrane pass occupies residues 34–53 (WTAITLFIFLVCCQIPLFGI). Topologically, residues 54–76 (MSSDSADPFYWMRVILASNRGTL) are lumenal. The chain crosses the membrane as a helical span at residues 77–96 (MELGISPIVTSGLIMQLLAG). Residues 97–117 (AKIIEVGDTPKDRALFNGAQK) lie on the Cytoplasmic side of the membrane. Residues 118-138 (LFGMIITIGQAIVYVMTGMYG) form a helical membrane-spanning segment. Residues 139–144 (DPSDMG) lie on the Lumenal side of the membrane. A helical membrane pass occupies residues 145-165 (AGICLLIIIQLFVAGLIVLLL). The Cytoplasmic portion of the chain corresponds to 166-172 (DELLQKG). The helical transmembrane segment at 173 to 193 (YGLGSGISLFIATNICETIVW) threads the bilayer. Residues 194–240 (KAFSPTTVNTGRGTEFEGAIIALFHLLATRTDKVRALREAFYRQNLP) are Lumenal-facing. Residues 241–261 (NLMNLLATVFVFGVVIYFQGF) traverse the membrane as a helical segment. At 262-288 (RVDLPIKSARYRGQYNTYPIKLFYTSN) the chain is on the cytoplasmic side. A helical transmembrane segment spans residues 289-309 (IPIILQSALVSNLYVISQMLS). Topologically, residues 310–354 (TRFSGNFLVNLLGTWSDTSSGGPARAYPVGGLCYYFSPPESFGSV) are lumenal. A helical transmembrane segment spans residues 355 to 375 (LDDPIHAAIYICFMLGSCAFF). At 376 to 420 (SKTWIEVSGSSAKDVAKQLKEQQMVMRGHRETSMVHELNRYIPTA) the chain is on the cytoplasmic side. Residues 421 to 441 (AAFGGLCIGGLSVMADFLGAI) form a helical membrane-spanning segment. At 442–445 (GSGT) the chain is on the lumenal side. The helical transmembrane segment at 446–462 (GILLAVTIIYQYFEIFV) threads the bilayer. The Cytoplasmic segment spans residues 463–476 (KEQSEMGSMGALLF).

This sequence belongs to the SecY/SEC61-alpha family. In terms of assembly, the SEC61 channel-forming translocon complex consists of channel-forming core components SEC61A1, SEC61B and SEC61G and different auxiliary components such as SEC62 and SEC63.

The protein resides in the endoplasmic reticulum membrane. Its function is as follows. Component of SEC61 channel-forming translocon complex that mediates transport of signal peptide-containing precursor polypeptides across the endoplasmic reticulum (ER). Forms a ribosome receptor and a gated pore in the ER membrane, both functions required for cotranslational translocation of nascent polypeptides. The protein is Protein transport protein Sec61 subunit alpha isoform B (sec61ab) of Oncorhynchus mykiss (Rainbow trout).